The sequence spans 602 residues: T-cell surface protein tactile (602 aa).

An N-terminal signal peptide occupies residues 1–21; the sequence is MGRKWTYCVVYTIIQIQFFRG. Topologically, residues 22 to 536 are extracellular; that stretch reads VWEELFNVGD…IIVNQPSDGM (515 aa). 2 Ig-like V-type domains span residues 24-134 and 138-244; these read EELF…VYNL and PYTQ…STTV. N-linked (GlcNAc...) asparagine glycosylation is found at N42, N100, N107, N145, N153, N163, N195, N196, N258, N281, N306, N330, N348, N415, N436, and N514. An intrachain disulfide couples C45 to C118. C160 and C228 are joined by a disulfide. One can recognise an Ig-like C2-type domain in the interval 250–355; it reads PEILMTVENS…MWNTSSQPIT (106 aa). C271 and C335 are joined by a disulfide. A disordered region spans residues 402–478; the sequence is ENGLTPDATP…PQEPDSPVSW (77 aa). Residues 409 to 433 are compositionally biased toward polar residues; it reads ATPQTSNSSMTTKDGNYLEASSGTD. Residues 434 to 448 show a composition bias toward low complexity; the sequence is AKNSSRAAASSKSGS. The helical transmembrane segment at 537–557 threads the bilayer; that stretch reads SWPVLVAALLFFCTLLFGLGV. Residues 558–602 are Cytoplasmic-facing; that stretch reads RKWYRYQNEIMERPPPFKPPPPPIKYTYIQEPIGCDLCCHEMEVL.

As to quaternary structure, homodimer; disulfide-linked. Interacts with PVR.

The protein resides in the membrane. Functionally, may be involved in adhesive interactions of activated T and NK cells during the late phase of the immune response. Promotes NK cell-target adhesion by interacting with PVR present on target cells. May function at a time after T and NK cells have penetrated the endothelium using integrins and selectins, when they are actively engaging diseased cells and moving within areas of inflammation. This is T-cell surface protein tactile (Cd96) from Mus musculus (Mouse).